A 314-amino-acid chain; its full sequence is GTP-binding protein gtr2 (314 aa).

GTP contacts are provided by S17, S18, S37, H118, and D121.

Belongs to the GTR/RAG GTP-binding protein family.

The protein resides in the vacuole membrane. The protein localises to the cytoplasm. Its subcellular location is the nucleus. It carries out the reaction GTP + H2O = GDP + phosphate + H(+). Functionally, GTPase involved in activation of the TORC1 signaling pathway, which promotes growth and represses autophagy in nutrient-rich conditions. Also required for TORC1 inactivation during nitrogen starvation. The polypeptide is GTP-binding protein gtr2 (gtr2) (Schizosaccharomyces pombe (strain 972 / ATCC 24843) (Fission yeast)).